The following is a 491-amino-acid chain: Pre-glycoprotein polyprotein GP complex (491 aa).

The N-myristoyl glycine; by host moiety is linked to residue glycine 2. Residues 2–17 lie on the Extracellular side of the membrane; it reads GQIVTFFQEVPHIIEE. The chain crosses the membrane as a helical span at residues 18–33; that stretch reads VMNIVLITLSLLAILK. Topologically, residues 34-58 are cytoplasmic; it reads GIYNVMTCGLIGLLTFLFLCGKSCS. Zn(2+) is bound at residue cysteine 57. Residues 59–432 are Extracellular-facing; sequence TIYKDNYRLM…QGTTPLGLVD (374 aa). N-linked (GlcNAc...) asparagine; by host glycosylation is found at asparagine 78, asparagine 88, asparagine 98, asparagine 108, asparagine 118, and asparagine 166. Disulfide bonds link cysteine 85-cysteine 231, cysteine 117-cysteine 154, cysteine 179-cysteine 212, cysteine 279-cysteine 292, cysteine 301-cysteine 310, and cysteine 364-cysteine 385. N-linked (GlcNAc...) asparagine; by host glycosylation occurs at asparagine 224. 4 N-linked (GlcNAc...) asparagine; by host glycosylation sites follow: asparagine 365, asparagine 373, asparagine 390, and asparagine 395. Residues 433-453 form a helical membrane-spanning segment; it reads LFVFSTSFYLISVFLHLIKIP. Over 454–491 the chain is Cytoplasmic; sequence THRHLVGKPCPKPHRLNHMGVCSCGLYKQPGLPTKWKR. Zn(2+)-binding residues include histidine 455, histidine 457, cysteine 463, histidine 467, cysteine 475, and cysteine 477.

The protein belongs to the arenaviridae GPC protein family. In terms of assembly, interacts with glycoprotein G2. Part of the GP complex (GP-C) together with glycoprotein G1 and glycoprotein G2. The GP-complex interacts with protein Z, which interacts with ribonucleocapsid; these interactions may induce virion budding. Homotrimer; disulfide-linked. In pre-fusion state, G1 homotrimers bind G2 homotrimers via ionic interactions. Part of the GP complex (GP-C) together with glycoprotein G2 and the stable signal peptide. The GP-complex interacts with protein Z, which interacts with ribonucleocapsid; these interactions may induce virion budding. As to quaternary structure, homotrimer. Interacts with the stable signal peptide. In pre-fusion state, G2 homotrimers bind G1 homotrimers via ionic interactions. Part of the GP complex (GP-C) together with glycoprotein G1 and the stable signal peptide. Acidification in the endosome triggers rearrangements, which ultimately leads to a 6 helix bundle formed by the two heptad repeat domains (HR1 and HR2) in post-fusion state. The GP-complex interacts with protein Z, which interacts with ribonucleocapsid; these interactions may induce virion budding. Post-translationally, specific enzymatic cleavages in vivo yield mature proteins. GP-C polyprotein is cleaved in the endoplasmic reticulum by the host protease MBTPS1. Only cleaved glycoprotein is incorporated into virions. The SSP remains stably associated with the GP complex following cleavage by signal peptidase and plays crucial roles in the trafficking of GP through the secretory pathway. In terms of processing, myristoylation is necessary for GP2-mediated fusion activity.

It is found in the virion membrane. The protein resides in the host endoplasmic reticulum membrane. The protein localises to the host Golgi apparatus membrane. It localises to the host cell membrane. In terms of biological role, functions as a cleaved signal peptide that is retained as the third component of the GP complex (GP-C). Helps to stabilize the spike complex in its native conformation. The SSP is required for efficient glycoprotein expression, post-translational maturation cleavage of G1 and G2, glycoprotein transport to the cell surface plasma membrane, formation of infectious virus particles, and acid pH-dependent glycoprotein-mediated cell fusion. Its function is as follows. Forms the virion spikes together with glycoprotein G2. The glycoprotein spike trimers are connected to the underlying matrix. Mediates virus attachment to host receptor alpha-dystroglycan DAG1. This attachment induces virion internalization predominantly through clathrin- and caveolin-independent endocytosis. Functionally, forms the virion spikes together with glycoprotein G1. The glycoprotein spike trimers are connected to the underlying matrix. Class I viral fusion protein that directs fusion of viral and host endosomal membranes, leading to delivery of the nucleocapsid into the cytoplasm. Membrane fusion is mediated by irreversible conformational changes induced by acidification. The polypeptide is Pre-glycoprotein polyprotein GP complex (Mobala mammarenavirus (isolate Rat/Central African Republic/Acar 3080/1983) (MOBV)).